A 376-amino-acid polypeptide reads, in one-letter code: Lipoprotein p33 (376 aa).

An N-terminal signal peptide occupies residues 1–30 (MKIKKIKLLKALALTGAFGIVATVPVIVSS). The N-palmitoyl cysteine moiety is linked to residue Cys-31. Residue Cys-31 is the site of S-diacylglycerol cysteine attachment. Positions 33–59 (STDNNGGTGDNNTGGGGSGTDQQQGTT) are disordered. Over residues 38–51 (GGTGDNNTGGGGSG) the composition is skewed to gly residues.

This sequence belongs to the p35 lipoprotein family.

It is found in the cell membrane. The sequence is that of Lipoprotein p33 from Malacoplasma penetrans (strain HF-2) (Mycoplasma penetrans).